We begin with the raw amino-acid sequence, 207 residues long: Granulocyte colony-stimulating factor (207 aa).

The signal sequence occupies residues 1–30 (MAGPATQSPMKLMALQLLLWHSALWTVQEA). Cystine bridges form between Cys69/Cys75 and Cys97/Cys107. An O-linked (GalNAc...) threonine glycan is attached at Thr166.

The protein belongs to the IL-6 superfamily. In terms of assembly, monomer. In terms of processing, O-glycan consists of Gal-GalNAc disaccharide which can be modified with up to two sialic acid residues (done in recombinantly expressed G-CSF from CHO cells).

The protein resides in the secreted. Its function is as follows. Granulocyte/macrophage colony-stimulating factors are cytokines that act in hematopoiesis by controlling the production, differentiation, and function of 2 related white cell populations of the blood, the granulocytes and the monocytes-macrophages. This CSF induces granulocytes. The sequence is that of Granulocyte colony-stimulating factor (CSF3) from Homo sapiens (Human).